The following is a 100-amino-acid chain: Large ribosomal subunit protein uL23 (100 aa).

This sequence belongs to the universal ribosomal protein uL23 family. Part of the 50S ribosomal subunit. Contacts protein L29, and trigger factor when it is bound to the ribosome.

In terms of biological role, one of the early assembly proteins it binds 23S rRNA. One of the proteins that surrounds the polypeptide exit tunnel on the outside of the ribosome. Forms the main docking site for trigger factor binding to the ribosome. The chain is Large ribosomal subunit protein uL23 from Proteus mirabilis (strain HI4320).